We begin with the raw amino-acid sequence, 314 residues long: Dihydroorotate dehydrogenase (fumarate) (314 aa).

Substrate-binding positions include Lys-46, 70–74, and Asn-130; that span reads NSMGL. Residue 46-47 participates in FMN binding; that stretch reads KS. Residue Asn-130 participates in FMN binding. Catalysis depends on nucleophile residues Ser-132 and Cys-133. FMN is bound by residues Lys-167 and Ile-195. 196–197 contacts substrate; that stretch reads NS. FMN-binding positions include Gly-224, 252–253, and 274–275; these read GG and GT.

This sequence belongs to the dihydroorotate dehydrogenase family. Type 1 subfamily. In terms of assembly, homodimer. Requires FMN as cofactor.

It localises to the cytoplasm. The catalysed reaction is (S)-dihydroorotate + fumarate = orotate + succinate. It functions in the pathway pyrimidine metabolism; UMP biosynthesis via de novo pathway. Its function is as follows. Catalyzes the conversion of dihydroorotate to orotate with fumarate as the electron acceptor. This is Dihydroorotate dehydrogenase (fumarate) (URA1) from Saccharomyces paradoxus (Yeast).